Here is a 426-residue protein sequence, read N- to C-terminus: Kelch repeat-containing protein At3g27220 (426 aa).

The helical transmembrane segment at Leu-18–Cys-38 threads the bilayer. Kelch repeat units lie at residues Leu-123–Asp-170, Tyr-173–Gly-222, Leu-224–Asp-275, Lys-276–Val-338, and Ser-341–Gly-394.

Its subcellular location is the membrane. This chain is Kelch repeat-containing protein At3g27220, found in Arabidopsis thaliana (Mouse-ear cress).